We begin with the raw amino-acid sequence, 31 residues long: Cyclotide hyen-J (31 aa).

Positions 1-31 (GSVPCGESCVWIPCITSIAGCSCSNKVCYMD) form a cross-link, cyclopeptide (Gly-Asp). Disulfide bonds link Cys5–Cys21, Cys9–Cys23, and Cys14–Cys28.

This is a cyclic peptide. As to expression, detected in seeds (at protein level).

Functionally, probably participates in a plant defense mechanism. This is Cyclotide hyen-J from Pigea enneasperma (Spade flower).